The primary structure comprises 382 residues: ATP phosphoribosyltransferase regulatory subunit (382 aa).

The protein belongs to the class-II aminoacyl-tRNA synthetase family. HisZ subfamily. Heteromultimer composed of HisG and HisZ subunits.

The protein localises to the cytoplasm. Its pathway is amino-acid biosynthesis; L-histidine biosynthesis; L-histidine from 5-phospho-alpha-D-ribose 1-diphosphate: step 1/9. Required for the first step of histidine biosynthesis. May allow the feedback regulation of ATP phosphoribosyltransferase activity by histidine. This chain is ATP phosphoribosyltransferase regulatory subunit, found in Lacticaseibacillus casei (strain BL23) (Lactobacillus casei).